Consider the following 201-residue polypeptide: Probable GTP-binding protein EngB (201 aa).

The EngB-type G domain maps to 22–197 (TFPEYAFIGR…LNYIESINKE (176 aa)). Residues 30–37 (GRSNVGKS), 57–61 (GKTML), 75–78 (DLPG), 142–145 (TKAD), and 175–178 (ITSS) contribute to the GTP site. Mg(2+) contacts are provided by serine 37 and threonine 59.

This sequence belongs to the TRAFAC class TrmE-Era-EngA-EngB-Septin-like GTPase superfamily. EngB GTPase family. Mg(2+) is required as a cofactor.

In terms of biological role, necessary for normal cell division and for the maintenance of normal septation. This is Probable GTP-binding protein EngB from Bacteroides fragilis (strain YCH46).